The chain runs to 190 residues: Probable nicotinate-nucleotide adenylyltransferase (190 aa).

The protein belongs to the NadD family.

It carries out the reaction nicotinate beta-D-ribonucleotide + ATP + H(+) = deamido-NAD(+) + diphosphate. It participates in cofactor biosynthesis; NAD(+) biosynthesis; deamido-NAD(+) from nicotinate D-ribonucleotide: step 1/1. Its function is as follows. Catalyzes the reversible adenylation of nicotinate mononucleotide (NaMN) to nicotinic acid adenine dinucleotide (NaAD). This chain is Probable nicotinate-nucleotide adenylyltransferase, found in Frankia casuarinae (strain DSM 45818 / CECT 9043 / HFP020203 / CcI3).